We begin with the raw amino-acid sequence, 728 residues long: Myb-related protein A (728 aa).

A disordered region spans residues 1-31 (MAGRARSEDEEEDGQFTEHDYDVSLQKGPKK). 3 consecutive HTH myb-type domains span residues 30 to 80 (KKPW…HKVL), 81 to 136 (SPEL…NPDV), and 137 to 187 (KKSS…KRKV). 3 DNA-binding regions (H-T-H motif) span residues 57–80 (WGVV…HKVL), 109–132 (WSII…HNHL), and 160–183 (WAEI…NSTM). Residues 230–293 (IPRYSSLSHD…RKRVPSGSSL (64 aa)) are transcriptional activation domain. The interval 296–534 (SESYHMGESM…IRRSLMAVTP (239 aa)) is negative regulatory domain.

As to quaternary structure, component of the DREAM complex.

The protein resides in the nucleus. Functionally, transcription factor that specifically recognizes the sequence 5'-YAAC[GT]G-3'. Acts as a master regulator of male meiosis by promoting expression of piRNAs. The piRNA metabolic process mediates the repression of transposable elements during meiosis by forming complexes composed of piRNAs and Piwi proteins and governs the methylation and subsequent repression of transposons, which is essential for the germline integrity. The protein is Myb-related protein A (mybl1) of Xenopus laevis (African clawed frog).